Consider the following 60-residue polypeptide: Large ribosomal subunit protein bL32 (60 aa).

It belongs to the bacterial ribosomal protein bL32 family.

The sequence is that of Large ribosomal subunit protein bL32 from Streptococcus gordonii (strain Challis / ATCC 35105 / BCRC 15272 / CH1 / DL1 / V288).